Here is a 560-residue protein sequence, read N- to C-terminus: Putative transport protein VS_1837 (560 aa).

5 consecutive transmembrane segments (helical) span residues 5–25 (VVLLLKQNPILLIFVVLSIGL), 37–57 (LGNSIGVLITSLIMGHLGFSF), 66–86 (FMLFIYCVGIEAGPNFFGIFF), 91–111 (HYLILSLVVLSTAIALTYFCS), and 155–175 (LGLVIENLSVGYAMAYLVGLI). 2 consecutive RCK C-terminal domains span residues 203 to 292 (RGLG…FRNG) and 293 to 376 (KEVF…KIGF). 6 helical membrane-spanning segments follow: residues 386–406 (LTAFCSFFILGILFGLITMTF), 409–429 (VSFGLGNAVGLLLSGIMLGFL), 450–470 (LGLMFFMVGIGLSAGGKIFEH), 478–498 (VIGIALIVSVLPVFFAYLVGA), 506–526 (ALLFGAIIGARTCAPAMDIVN), and 539–559 (AGTYAIANILMTLAGTFIIII).

The protein belongs to the AAE transporter (TC 2.A.81) family. YbjL subfamily.

It is found in the cell membrane. This Vibrio atlanticus (strain LGP32) (Vibrio splendidus (strain Mel32)) protein is Putative transport protein VS_1837.